Reading from the N-terminus, the 593-residue chain is 2-succinyl-5-enolpyruvyl-6-hydroxy-3-cyclohexene-1-carboxylate synthase (593 aa).

It belongs to the TPP enzyme family. MenD subfamily. Homodimer. Mg(2+) serves as cofactor. The cofactor is Mn(2+). Thiamine diphosphate is required as a cofactor.

It carries out the reaction isochorismate + 2-oxoglutarate + H(+) = 5-enolpyruvoyl-6-hydroxy-2-succinyl-cyclohex-3-ene-1-carboxylate + CO2. It participates in quinol/quinone metabolism; 1,4-dihydroxy-2-naphthoate biosynthesis; 1,4-dihydroxy-2-naphthoate from chorismate: step 2/7. Its pathway is quinol/quinone metabolism; menaquinone biosynthesis. Functionally, catalyzes the thiamine diphosphate-dependent decarboxylation of 2-oxoglutarate and the subsequent addition of the resulting succinic semialdehyde-thiamine pyrophosphate anion to isochorismate to yield 2-succinyl-5-enolpyruvyl-6-hydroxy-3-cyclohexene-1-carboxylate (SEPHCHC). This Pelodictyon phaeoclathratiforme (strain DSM 5477 / BU-1) protein is 2-succinyl-5-enolpyruvyl-6-hydroxy-3-cyclohexene-1-carboxylate synthase.